The chain runs to 627 residues: Chaperone protein DnaK (627 aa).

Phosphothreonine; by autocatalysis is present on threonine 197. A compositionally biased stretch (low complexity) spans alanine 598 to aspartate 611. Residues alanine 598–glutamate 627 are disordered. Over residues aspartate 618 to glutamate 627 the composition is skewed to acidic residues.

It belongs to the heat shock protein 70 family.

Its function is as follows. Acts as a chaperone. This chain is Chaperone protein DnaK, found in Sulfurovum sp. (strain NBC37-1).